The sequence spans 331 residues: Mitochondrial glycine transporter (331 aa).

3 Solcar repeats span residues 19–103, 132–216, and 234–318; these read SRTT…LRQG, LSNW…LKRR, and SSSS…LILR. Transmembrane regions (helical) follow at residues 25–50, 78–104, 138–163, 191–214, 238–264, and 293–311; these read FAAGLCSGLTSSILLQPADLLKTRVQ, GTLPSALRTGFGSALYFTSLNALRQGL, LATGAVARTAAGFVMMPVTVLKVRYE, GFGATAARDAPYAGLYVLFYEQLK, INFVSGGLAAGLATAITNPFDAVKTRL, and GLGLRITRKALSSALAWTV.

It belongs to the mitochondrial carrier (TC 2.A.29) family. SLC25A38 subfamily.

The protein localises to the mitochondrion inner membrane. It carries out the reaction glycine(in) = glycine(out). Functionally, mitochondrial glycine transporter that imports glycine into the mitochondrial matrix. Plays an important role in providing glycine for the first enzymatic step in heme biosynthesis, the condensation of glycine with succinyl-CoA to produce 5-aminolevulinate (ALA) in the mitochondrial matrix. This chain is Mitochondrial glycine transporter, found in Neosartorya fischeri (strain ATCC 1020 / DSM 3700 / CBS 544.65 / FGSC A1164 / JCM 1740 / NRRL 181 / WB 181) (Aspergillus fischerianus).